The primary structure comprises 151 residues: Transcription antitermination protein NusB (151 aa).

It belongs to the NusB family.

Its function is as follows. Involved in transcription antitermination. Required for transcription of ribosomal RNA (rRNA) genes. Binds specifically to the boxA antiterminator sequence of the ribosomal RNA (rrn) operons. The polypeptide is Transcription antitermination protein NusB (Thermus thermophilus (strain ATCC BAA-163 / DSM 7039 / HB27)).